The chain runs to 415 residues: Dibenzothiophene monooxygenase (415 aa).

Residues Y94, N127–N132, K157–S161, R280, I365–G366, and T387 contribute to the FMN site. A lid loop region spans residues S129–K140.

Belongs to the DszC flavin monooxygenase family. Homotetramer.

It localises to the cytoplasm. It catalyses the reaction dibenzothiophene + 2 FMNH2 + 2 O2 = dibenzothiophene 5,5-dioxide + 2 FMN + 2 H2O + 2 H(+). It carries out the reaction dibenzothiophene + FMNH2 + O2 = dibenzothiophene 5-oxide + FMN + H2O + H(+). The enzyme catalyses dibenzothiophene 5-oxide + FMNH2 + O2 = dibenzothiophene 5,5-dioxide + FMN + H2O + H(+). The protein operates within sulfur metabolism; dibenzothiophene degradation. With respect to regulation, inhibited at high concentrations of FMN or FAD. In terms of biological role, catalyzes the first step of the '4S' desulfurization pathway that removes covalently bound sulfur from dibenzothiophene (DBT) without breaking carbon-carbon bonds. Sulfur dioxygenase which converts DBT to DBT-sulfone (DBTO2 or DBT 5,5-dioxide) probably in a stepwise manner. In addition to FMNH2 can also use FAD (although FAD is less efficient). The chain is Dibenzothiophene monooxygenase from Mycolicibacterium goodii (Mycobacterium goodii).